We begin with the raw amino-acid sequence, 148 residues long: Large ribosomal subunit protein bL9 (148 aa).

Residues 46 to 65 (QLQQQNKHAEQEREQEIEDA) form a disordered region. Positions 52–65 (KHAEQEREQEIEDA) are enriched in basic and acidic residues.

The protein belongs to the bacterial ribosomal protein bL9 family.

Functionally, binds to the 23S rRNA. The sequence is that of Large ribosomal subunit protein bL9 from Staphylococcus carnosus (strain TM300).